Consider the following 230-residue polypeptide: MKITKNILKAEFIKRPNRFQAYVKINEKIEMVHVPNTGRCKEILIPGSTVILREENNENRKTRYDLIAGYKGDMLISIDSQIPNKVVYEALMNFKIEILKEYTNIKREKTFGKSRFDFKLEKENGEVYYLEVKGVTLENDGLTMFPDAPTERGTKHILELIDVKNKGMGAGVLFLIQLNGVKKFTPNHKMDKNFGEALRLAKEKGVDILAYDCLVEESSISLNNPVSIEI.

This sequence belongs to the SfsA family.

In Clostridium botulinum (strain 657 / Type Ba4), this protein is Sugar fermentation stimulation protein homolog.